Reading from the N-terminus, the 368-residue chain is 3-dehydroquinate synthase (368 aa).

NAD(+)-binding positions include 112–116 (GVIGD), 136–137 (TT), lysine 149, and lysine 158. Residues glutamate 191, histidine 256, and histidine 273 each contribute to the Zn(2+) site.

The protein belongs to the sugar phosphate cyclases superfamily. Dehydroquinate synthase family. The cofactor is Co(2+). Requires Zn(2+) as cofactor. NAD(+) is required as a cofactor.

The protein resides in the cytoplasm. It catalyses the reaction 7-phospho-2-dehydro-3-deoxy-D-arabino-heptonate = 3-dehydroquinate + phosphate. It participates in metabolic intermediate biosynthesis; chorismate biosynthesis; chorismate from D-erythrose 4-phosphate and phosphoenolpyruvate: step 2/7. Its function is as follows. Catalyzes the conversion of 3-deoxy-D-arabino-heptulosonate 7-phosphate (DAHP) to dehydroquinate (DHQ). The protein is 3-dehydroquinate synthase of Prochlorococcus marinus (strain NATL1A).